A 277-amino-acid polypeptide reads, in one-letter code: Nudix hydrolase 10 (277 aa).

The 139-residue stretch at Trp97 to His235 folds into the Nudix hydrolase domain. Positions Gly142–Gly163 match the Nudix box motif. Mg(2+)-binding residues include Glu157 and Glu161.

Belongs to the Nudix hydrolase family. Requires Mg(2+) as cofactor. It depends on Mn(2+) as a cofactor. Expressed in roots, stems and, at lower level, leaves.

It carries out the reaction ADP-D-ribose + H2O = D-ribose 5-phosphate + AMP + 2 H(+). It catalyses the reaction NAD(+) + H2O = beta-nicotinamide D-ribonucleotide + AMP + 2 H(+). The enzyme catalyses NADH + H2O = reduced beta-nicotinamide D-ribonucleotide + AMP + 2 H(+). Functionally, may mediate the hydrolysis of some nucleoside diphosphate derivatives. In vitro, uses both ADP-ribose and NADH as substrates; however the relevance of such substrates in vivo is unclear. The protein is Nudix hydrolase 10 (NUDT10) of Arabidopsis thaliana (Mouse-ear cress).